The sequence spans 131 residues: Sec-independent protein translocase protein TatB (131 aa).

The chain crosses the membrane as a helical span at residues 2–22 (LGSLSWEHMLVLVVVGLVVLG). A disordered region spans residues 96–131 (AFDRPVNGAAAQPPPAPAPPPEPHRPGQTPFDADAT). Residues 107–116 (QPPPAPAPPP) are compositionally biased toward pro residues.

It belongs to the TatB family. As to quaternary structure, the Tat system comprises two distinct complexes: a TatABC complex, containing multiple copies of TatA, TatB and TatC subunits, and a separate TatA complex, containing only TatA subunits. Substrates initially bind to the TatABC complex, which probably triggers association of the separate TatA complex to form the active translocon.

The protein resides in the cell membrane. Functionally, part of the twin-arginine translocation (Tat) system that transports large folded proteins containing a characteristic twin-arginine motif in their signal peptide across membranes. Together with TatC, TatB is part of a receptor directly interacting with Tat signal peptides. TatB may form an oligomeric binding site that transiently accommodates folded Tat precursor proteins before their translocation. This chain is Sec-independent protein translocase protein TatB, found in Mycobacterium avium (strain 104).